Reading from the N-terminus, the 748-residue chain is 5-methyltetrahydropteroyltriglutamate--homocysteine methyltransferase (748 aa).

Residues 18 to 21 and lysine 112 contribute to the 5-methyltetrahydropteroyltri-L-glutamate site; that span reads REWK. L-homocysteine is bound by residues 420-422 and glutamate 473; that span reads IGS. L-methionine is bound by residues 420–422 and glutamate 473; that span reads IGS. A 5-methyltetrahydropteroyltri-L-glutamate-binding site is contributed by tryptophan 550. Aspartate 588 is a binding site for L-homocysteine. Position 588 (aspartate 588) interacts with L-methionine. Glutamate 594 contacts 5-methyltetrahydropteroyltri-L-glutamate. Zn(2+) contacts are provided by histidine 630, cysteine 632, and glutamate 654. The active-site Proton donor is histidine 683. A Zn(2+)-binding site is contributed by cysteine 715.

It belongs to the vitamin-B12 independent methionine synthase family. Zn(2+) serves as cofactor.

The catalysed reaction is 5-methyltetrahydropteroyltri-L-glutamate + L-homocysteine = tetrahydropteroyltri-L-glutamate + L-methionine. It participates in amino-acid biosynthesis; L-methionine biosynthesis via de novo pathway; L-methionine from L-homocysteine (MetE route): step 1/1. Catalyzes the transfer of a methyl group from 5-methyltetrahydrofolate to homocysteine resulting in methionine formation. This Staphylococcus epidermidis (strain ATCC 35984 / DSM 28319 / BCRC 17069 / CCUG 31568 / BM 3577 / RP62A) protein is 5-methyltetrahydropteroyltriglutamate--homocysteine methyltransferase.